A 682-amino-acid polypeptide reads, in one-letter code: Nisin leader peptide-processing serine protease NisP (682 aa).

The first 22 residues, 1–22 (MKKILGFLFIVCSLGLSATVHG), serve as a signal peptide directing secretion. Positions 23–195 (ETTNSQQLLS…RKAKEVVSLR (173 aa)) are excised as a propeptide. The region spanning 231–566 (QWDMKYVTNN…VDLLNGKNKA (336 aa)) is the Peptidase S8 domain. Catalysis depends on charge relay system residues D259, H306, and S512. The LPXTG sorting signal signature appears at 652-656 (LPVTG). A Pentaglycyl murein peptidoglycan amidated threonine modification is found at T655. A propeptide spans 656 to 682 (GDGEDFLPALGIVCISILGILKRKTKN) (removed by sortase).

This sequence belongs to the peptidase S8 family.

The protein localises to the secreted. The protein resides in the cell wall. The protein operates within antibiotic biosynthesis; nisin biosynthesis. Its function is as follows. Cleaves the lantibiotic nisin precursor peptide. In Lactococcus lactis subsp. lactis (Streptococcus lactis), this protein is Nisin leader peptide-processing serine protease NisP (nisP).